The chain runs to 393 residues: Arginine biosynthesis bifunctional protein ArgJ 3 (393 aa).

Substrate contacts are provided by Thr-148, Lys-170, Thr-181, Glu-260, Asn-388, and Thr-393. The Nucleophile role is filled by Thr-181.

This sequence belongs to the ArgJ family. As to quaternary structure, heterotetramer of two alpha and two beta chains.

It localises to the cytoplasm. The enzyme catalyses N(2)-acetyl-L-ornithine + L-glutamate = N-acetyl-L-glutamate + L-ornithine. It catalyses the reaction L-glutamate + acetyl-CoA = N-acetyl-L-glutamate + CoA + H(+). The protein operates within amino-acid biosynthesis; L-arginine biosynthesis; L-ornithine and N-acetyl-L-glutamate from L-glutamate and N(2)-acetyl-L-ornithine (cyclic): step 1/1. It participates in amino-acid biosynthesis; L-arginine biosynthesis; N(2)-acetyl-L-ornithine from L-glutamate: step 1/4. Functionally, catalyzes two activities which are involved in the cyclic version of arginine biosynthesis: the synthesis of N-acetylglutamate from glutamate and acetyl-CoA as the acetyl donor, and of ornithine by transacetylation between N(2)-acetylornithine and glutamate. The polypeptide is Arginine biosynthesis bifunctional protein ArgJ 3 (Streptomyces clavuligerus).